Here is a 3036-residue protein sequence, read N- to C-terminus: DmX-like protein 2 (3036 aa).

WD repeat units lie at residues 108-145 (FLSS…ILEE), 167-207 (KTSV…KSSI), and 230-278 (AHPR…EDCL). Phosphoserine is present on S326. The interval 417 to 480 (KQVDHENDDA…EGSPRTYSRL (64 aa)) is disordered. Residues 422–434 (ENDDADREDEEHS) show a composition bias toward acidic residues. Positions 435–473 (QEDRERGLHMKLDHDLSLDRESEAGTGSSEHEDGEREGS) are enriched in basic and acidic residues. S473 is subject to Phosphoserine. A WD 4 repeat occupies 492–532 (DRKIETLLTEWNKNPDMLFTIHPVDGTFLVWHVKYLDEYNP). S588 bears the Phosphoserine mark. 3 WD repeats span residues 595–634 (HSRS…KSAF), 751–803 (LHTS…RKLL), and 878–920 (QPSQ…VQAC). The interval 932–959 (SLLSVPGQKNVDSSPETSPSVSPMPHSS) is disordered. 2 positions are modified to phosphoserine: S944 and S945. Low complexity predominate over residues 949-959 (SPSVSPMPHSS). One copy of the WD 8 repeat lies at 1000-1037 (LSSSSIYPVCLAPYLVVTTCSDNKVRFWKCCMEANPEC). A phosphoserine mark is found at S1140, S1143, and S1151. WD repeat units lie at residues 1163–1204 (PNIK…VTEQ) and 1244–1281 (GTPS…VKFG). Phosphoserine occurs at positions 1287 and 1400. Phosphothreonine is present on T1417. S1857 carries the post-translational modification Phosphoserine. A compositionally biased stretch (basic and acidic residues) spans 1927-1936 (ISHRMDDVPS). The segment at 1927-1952 (ISHRMDDVPSHSKALSDGNGSSGIEW) is disordered. S1984 bears the Phosphoserine mark. A disordered region spans residues 1999–2033 (KSTDAREKDKQSDQKASDPNMLLTPQEEDDPEGDT). Residues 2001 to 2014 (TDAREKDKQSDQKA) are compositionally biased toward basic and acidic residues. Phosphothreonine is present on T2022. A compositionally biased stretch (acidic residues) spans 2024–2033 (QEEDDPEGDT). Residues 2122–2153 (GSYERHQIERRRLQAKREHAERRKSWLQKNQD) are a coiled coil. Phosphoserine occurs at positions 2399 and 2640. WD repeat units follow at residues 2761–2800 (RNLH…QLVC), 2804–2843 (AGNA…SNPK), 2850–2892 (CHSK…GNSL), 2898–2937 (CHDH…LIHT), 2940–2979 (AHDS…LIHS), and 2992–3030 (NIGA…NIPN).

As to quaternary structure, interacts with MADD and RAB3GAP.

Its subcellular location is the cytoplasmic vesicle. The protein resides in the secretory vesicle. It is found in the synaptic vesicle membrane. It localises to the neuronal dense core vesicle. In terms of biological role, may serve as a scaffold protein for MADD and RAB3GA on synaptic vesicles. Plays a role in the brain as a key controller of neuronal and endocrine homeostatic processes. This Homo sapiens (Human) protein is DmX-like protein 2 (DMXL2).